The chain runs to 3175 residues: Replicase polyprotein 1ab (3175 aa).

The C4-type; atypical zinc-finger motif lies at 25–44; the sequence is CEHGAGLCCEVDGSTLCAEC. The Peptidase C31 domain maps to 66-156; the sequence is SPVPVGHKFL…PAANSLIVTT (91 aa). In terms of domain architecture, Peptidase C32 spans 157-260; sequence DQEQDGFCWL…WSCLPAGNYG (104 aa). Catalysis depends on for Nsp1 papain-like cysteine proteinase activity residues Cys-164 and His-230. The interval 261 to 339 is OTU-like; the sequence is GYNPPGDGAC…KQHWRVKRAK (79 aa). The Peptidase C33 domain occupies 261 to 360; it reads GYNPPGDGAC…RGICNCQRMS (100 aa). Cys-270 serves as the catalytic For Nsp2 cysteine proteinase activity. Cys-319 is a Zn(2+) binding site. His-332 serves as the catalytic For Nsp2 cysteine proteinase activity. Zn(2+) contacts are provided by Cys-349, Cys-354, and Cys-356. Positions 386–451 are disordered; that stretch reads VVTPEGQPRP…TRLQGASTQE (66 aa). Helical transmembrane passes span 530–550, 551–571, 625–645, 829–849, 903–923, 935–955, and 977–997; these read AVIA…SFAI, GLIP…SSAN, FDAA…ILYL, LIGG…STFT, YWIA…RLAI, LVLL…SLAG, and LVTM…LMGL. The segment at 530–645 is HD1; the sequence is AVIACLLPIW…DLCSFAILYL (116 aa). The HD2 stretch occupies residues 829–997; sequence LIGGWIYGIC…ALAVYSLMGL (169 aa). The region spanning 1065–1268 is the Peptidase S32 domain; sequence GLFRSPKARG…MLIDGLSNRE (204 aa). Residues His-1103, Asp-1129, and Ser-1184 each act as charge relay system; for 3C-like serine proteinase activity in the active site. 4 helical membrane passes run 1291 to 1311, 1333 to 1353, 1355 to 1375, and 1385 to 1405; these read AYLP…KSVG, CLFH…WFYI, AAGT…MLFV, and GWAI…AALG. The interval 1291–1405 is HD3; sequence AYLPYVLGFF…SITMLAAALG (115 aa). N-linked (GlcNAc...) asparagine; by host glycosylation occurs at Asn-1501. A disordered region spans residues 1577-1614; the sequence is NDTPVKPMPSRRRRKGLPKGAQLEWDRHQEEKRNAGDD. Residues 1600-1612 show a composition bias toward basic and acidic residues; that stretch reads EWDRHQEEKRNAG. A NiRAN domain is found at 1716–1883; that stretch reads LANPVEAVNQ…DKVAAAVSGD (168 aa). The RdRp catalytic domain maps to 2116 to 2251; that stretch reads KYCLETDLES…TTPNQHYAAS (136 aa). An AV ZBD domain is found at 2371–2438; the sequence is SAVCTVCGAA…SPKQMVPKVP (68 aa). Residues Cys-2374, Cys-2377, Cys-2387, Cys-2392, Cys-2395, His-2399, His-2402, Cys-2403, Cys-2412, His-2414, Cys-2423, and Cys-2426 each contribute to the Zn(2+) site. The (+)RNA virus helicase ATP-binding domain occupies 2496–2661; sequence PGSHIAVPLQ…LRHFVSLEPL (166 aa). An ATP-binding site is contributed by 2528-2535; sequence GPPGSGKT. The region spanning 2662–2793 is the (+)RNA virus helicase C-terminal domain; sequence RVCHRFGAAV…PPTACHLGQE (132 aa). One can recognise an AV-Nsp11N/CoV-Nsp15M domain in the interval 2840–2930; it reads KISCLPRVAQ…LTEWVDGKAR (91 aa). A NendoU domain is found at 2932 to 3054; the sequence is LPDSLFSSGR…MVWRNATFYV (123 aa). Active-site residues include His-2963, His-2978, and Lys-3007.

This sequence belongs to the arteriviridae polyprotein family. As to quaternary structure, nsp1 interacts with cellular transcription cofactor SND1/p100. Post-translationally, specific enzymatic cleavages in vivo by its own proteases yield mature proteins. There are two alternative pathways for processing. Either nsp4-5 is cleaved, which represents the major pathway or the nsp5-6 and nsp6-7 are processed, which represents the minor pathway. The major pathway occurs when nsp2 acts as a cofactor for nsp4.

The protein localises to the host nucleus. The protein resides in the host cytoplasm. It is found in the host membrane. It localises to the host perinuclear region. It catalyses the reaction RNA(n) + a ribonucleoside 5'-triphosphate = RNA(n+1) + diphosphate. The catalysed reaction is ATP + H2O = ADP + phosphate + H(+). The enzyme catalyses Thiol-dependent hydrolysis of ester, thioester, amide, peptide and isopeptide bonds formed by the C-terminal Gly of ubiquitin (a 76-residue protein attached to proteins as an intracellular targeting signal).. It carries out the reaction uridylyl-uridylyl-ribonucleotide-RNA = a 3'-end uridylyl-2',3'-cyclophospho-uridine-RNA + a 5'-end dephospho-ribonucleoside-RNA. In terms of biological role, the replicase polyprotein 1ab is a multifunctional protein: it contains the activities necessary for the transcription of negative stranded RNA, leader RNA, subgenomic mRNAs and progeny virion RNA as well as proteinases responsible for the cleavage of the polyprotein into functional products. Functionally, nsp1 is essential for viral subgenomic mRNA synthesis. Nsp2 cysteine proteinase which cleaves the nsp2/nsp3 site in the polyprotein. Also displays deubiquitinating and deISGylase activities. The deubiquitinating activity cleaves both ubiquitinated and ISGylated products and may therefore regulate ubiquitin and ISG15 dependent host innate immunity. Its function is as follows. The 3C-like serine proteinase chain is responsible for the majority of cleavages as it cleaves the C-terminus of the polyprotein. In terms of biological role, the helicase chain, which contains a zinc finger structure, displays RNA and DNA duplex-unwinding activities with 5' to 3' polarity. Functionally, plays a role in viral transcription/replication and prevents the simultaneous activation of host cell dsRNA sensors, such as MDA5/IFIH1, OAS, and PKR. Acts by degrading the 5'-polyuridines generated during replication of the poly(A) region of viral genomic and subgenomic RNAs. Catalyzes a two-step reaction in which a 2'3'-cyclic phosphate (2'3'-cP) is first generated by 2'-O transesterification, which is then hydrolyzed to a 3'-phosphate (3'-P). If not degraded, poly(U) RNA would hybridize with poly(A) RNA tails and activate host dsRNA sensors. The protein is Replicase polyprotein 1ab (rep) of Equidae (horses).